The following is a 316-amino-acid chain: Probable cell division protein WhiA (316 aa).

A DNA-binding region (H-T-H motif) is located at residues 280–313 (SLKELGEMLEPPVGKSGVNHRLRKIEKIAEELRT).

The protein belongs to the WhiA family.

Its function is as follows. Involved in cell division and chromosome segregation. This is Probable cell division protein WhiA from Clostridium perfringens (strain 13 / Type A).